Consider the following 930-residue polypeptide: G patch domain-containing protein TGH (930 aa).

Residue Lys25 forms a Glycyl lysine isopeptide (Lys-Gly) (interchain with G-Cter in ubiquitin) linkage. The segment at 76-152 (GWAPQSFTSS…PSAIPGPVPD (77 aa)) is disordered. Residues 159-199 (SESIGVKLLLKMGWRRGHSIKEVRASSDARREARKAFLAFY) enclose the G-patch domain. The stretch at 405–447 (LIEGFATFVSRCGKLYEDLSREKNQSNQLFDFLREGNGHDYYA) is one SURP motif repeat. 3 disordered regions span residues 478-508 (AETR…GSFQ), 687-751 (RQVS…NEAA), and 773-930 (FEVP…RRRD). Residues 489-498 (PLQRSLKETD) show a composition bias toward basic and acidic residues. Residues 499-508 (TSASSGGSFQ) are compositionally biased toward polar residues. The span at 701–711 (IEEPEVEVEVE) shows a compositional bias: acidic residues. Over residues 779–808 (EEIKSRSKPEDSSDKRLDRPGLKEKVEEKT) the composition is skewed to basic and acidic residues. Residues 848 to 857 (RRKRYNKKDR) show a composition bias toward basic residues. The segment covering 858–877 (HRNDSESDSSSDYHSRDKQG) has biased composition (basic and acidic residues). The segment covering 892 to 908 (RSSHKKHSKHRRTKKSS) has biased composition (basic residues). Residues 913–923 (SSDEEQKESRR) show a composition bias toward basic and acidic residues.

As to expression, expressed in vasculature of cotyledons and leaves, young meristematic tissues, trichomes and pistils.

Its subcellular location is the nucleus speckle. It is found in the nucleus. The protein localises to the nucleoplasm. Its function is as follows. Functions as a component of microRNA (miRNA) and small interfering RNA (siRNA) biogenesis. May assist DCL1 and DCL4 to efficiently process and/or recruit the precursors of miRNAs and siRNAs. In the miRNA biogenesis pathway, associates with the DCL1 complex that processes primary miRNAs (pri-miRNAs) into miRNAs. Binds pri-miRNAs and precursor miRNAs (pre-miRNAs). Is required for the interaction between pri-miRNAs and DRB1. Required for general proper plant growth and, in particular, initiation of vascular development. Interacts genetically with AMP1, a glutamate carboxypeptidase involved in the regulation of meristem function. This chain is G patch domain-containing protein TGH, found in Arabidopsis thaliana (Mouse-ear cress).